Reading from the N-terminus, the 547-residue chain is Sodium-coupled neutral amino acid transporter 4 (547 aa).

Over 1–104 the chain is Extracellular; that stretch reads MDPIELRSVN…GLSYAMANTG (104 aa). S49 carries the phosphoserine modification. The chain crosses the membrane as a helical span at residues 105–125; the sequence is IVLFVIMLLTVAILSLYSVHL. Over 126–151 the chain is Cytoplasmic; it reads LLKTAKEGGSLIYEKLGEKAFGWPGK. A helical membrane pass occupies residues 152–172; the sequence is IGAFISITMQNIGAMSSYLFI. The Extracellular segment spans residues 173 to 195; sequence IKYELPEVIRVFMGLEENTGEWY. Residues 196 to 216 form a helical membrane-spanning segment; that stretch reads LNGNYLVLFVSVGIILPLSLL. Residues 217 to 220 lie on the Cytoplasmic side of the membrane; that stretch reads KNLG. The helical transmembrane segment at 221 to 241 threads the bilayer; it reads YLGYTSGFSLTCMVFFVSVVI. The Extracellular segment spans residues 242 to 332; sequence YKKFQIPCPL…PKYFVFNSRT (91 aa). C249 and C321 are joined by a disulfide. N-linked (GlcNAc...) asparagine glycans are attached at residues N260, N264, and N276. A helical membrane pass occupies residues 333–353; the sequence is AYAIPILAFAFVCHPEVLPIY. The Cytoplasmic segment spans residues 354–369; it reads SELKDRSRRKMQTVSN. A helical membrane pass occupies residues 370-390; sequence ISITGMLVMYLLAALFGYLSF. The Extracellular segment spans residues 391–411; that stretch reads YGEVEDELLHAYSKVYTFDTA. Residues 412 to 432 traverse the membrane as a helical segment; the sequence is LLMVRLAVLVAVTLTVPIVLF. Residues 433-453 are Cytoplasmic-facing; the sequence is PIRTSVITLLFPRRPFSWVKH. The chain crosses the membrane as a helical span at residues 454–474; that stretch reads FGIAAIIIALNNVLVILVPTI. Over 475–476 the chain is Extracellular; that stretch reads KY. The chain crosses the membrane as a helical span at residues 477–497; sequence IFGFIGASSATMLIFILPAAF. Residues 498–514 lie on the Cytoplasmic side of the membrane; it reads YLKLVKKEPLRSPQKIG. The chain crosses the membrane as a helical span at residues 515–535; that stretch reads ALVFLVTGIIFMMGSMALIII. Residues 536–547 lie on the Extracellular side of the membrane; that stretch reads DWIYNPPNPDHH.

It belongs to the amino acid/polyamine transporter 2 family. The disulfide bond plays an important role in substrate transport, but has no effect on trafficking to the cell surface. Expressed predominantly in liver, and at lower level in skeletal muscle.

The protein resides in the cell membrane. It is found in the cell projection. Its subcellular location is the microvillus membrane. The catalysed reaction is L-alanine(in) + Na(+)(in) = L-alanine(out) + Na(+)(out). It catalyses the reaction L-serine(in) + Na(+)(in) = L-serine(out) + Na(+)(out). The enzyme catalyses glycine(in) + Na(+)(in) = glycine(out) + Na(+)(out). It carries out the reaction L-cysteine(in) + Na(+)(in) = L-cysteine(out) + Na(+)(out). The catalysed reaction is L-asparagine(in) + Na(+)(in) = L-asparagine(out) + Na(+)(out). It catalyses the reaction L-threonine(in) + Na(+)(in) = L-threonine(out) + Na(+)(out). The enzyme catalyses L-proline(in) + Na(+)(in) = L-proline(out) + Na(+)(out). It carries out the reaction L-methionine(in) + Na(+)(in) = L-methionine(out) + Na(+)(out). The catalysed reaction is L-glutamine(in) + Na(+)(in) = L-glutamine(out) + Na(+)(out). It catalyses the reaction L-histidine(in) + Na(+)(in) = L-histidine(out) + Na(+)(out). Its function is as follows. Symporter that cotransports neutral amino acids and sodium ions from the extraccellular to the intracellular side of the cell membrane. The transport is electrogenic, pH dependent and partially tolerates substitution of Na(+) by Li(+). Preferentially transports smaller amino acids, such as glycine, L-alanine, L-serine, L-asparagine and L-threonine, followed by L-cysteine, L-histidine, L-proline and L-glutamine and L-methionine. In Rattus norvegicus (Rat), this protein is Sodium-coupled neutral amino acid transporter 4.